Here is a 62-residue protein sequence, read N- to C-terminus: Large ribosomal subunit protein bL28 (62 aa).

This sequence belongs to the bacterial ribosomal protein bL28 family.

This chain is Large ribosomal subunit protein bL28, found in Streptococcus gordonii (strain Challis / ATCC 35105 / BCRC 15272 / CH1 / DL1 / V288).